An 80-amino-acid chain; its full sequence is Exodeoxyribonuclease 7 small subunit (80 aa).

Belongs to the XseB family. In terms of assembly, heterooligomer composed of large and small subunits.

It is found in the cytoplasm. It carries out the reaction Exonucleolytic cleavage in either 5'- to 3'- or 3'- to 5'-direction to yield nucleoside 5'-phosphates.. Its function is as follows. Bidirectionally degrades single-stranded DNA into large acid-insoluble oligonucleotides, which are then degraded further into small acid-soluble oligonucleotides. This chain is Exodeoxyribonuclease 7 small subunit, found in Pseudomonas putida (strain ATCC 700007 / DSM 6899 / JCM 31910 / BCRC 17059 / LMG 24140 / F1).